We begin with the raw amino-acid sequence, 121 residues long: Large ribosomal subunit protein bL12 (121 aa).

Belongs to the bacterial ribosomal protein bL12 family. Homodimer. Part of the ribosomal stalk of the 50S ribosomal subunit. Forms a multimeric L10(L12)X complex, where L10 forms an elongated spine to which 2 to 4 L12 dimers bind in a sequential fashion. Binds GTP-bound translation factors.

Functionally, forms part of the ribosomal stalk which helps the ribosome interact with GTP-bound translation factors. Is thus essential for accurate translation. The chain is Large ribosomal subunit protein bL12 from Clostridioides difficile (strain 630) (Peptoclostridium difficile).